Consider the following 198-residue polypeptide: Glycerol-3-phosphate acyltransferase (198 aa).

5 helical membrane-spanning segments follow: residues 5–25 (LILL…LWIG), 56–76 (SIVT…PFFF), 84–104 (FWLL…FAGF), 114–134 (AGVI…VFLV), and 158–178 (LFMG…FVIW).

Belongs to the PlsY family. In terms of assembly, probably interacts with PlsX.

It is found in the cell membrane. The enzyme catalyses an acyl phosphate + sn-glycerol 3-phosphate = a 1-acyl-sn-glycero-3-phosphate + phosphate. It functions in the pathway lipid metabolism; phospholipid metabolism. Functionally, catalyzes the transfer of an acyl group from acyl-phosphate (acyl-PO(4)) to glycerol-3-phosphate (G3P) to form lysophosphatidic acid (LPA). This enzyme utilizes acyl-phosphate as fatty acyl donor, but not acyl-CoA or acyl-ACP. The sequence is that of Glycerol-3-phosphate acyltransferase from Listeria monocytogenes serotype 4b (strain CLIP80459).